The primary structure comprises 273 residues: Photosystem I chlorophyll a/b-binding protein 3-1, chloroplastic (273 aa).

The N-terminal 39 residues, 1–39 (MAAQALVSSSLTSSVQTARQIFGSKPVASASQKKSSFVV), are a transit peptide targeting the chloroplast. Trp-56 serves as a coordination point for chlorophyll b. Chlorophyll a is bound by residues Phe-76, Ser-82, and Glu-100. Arg-105 contacts chlorophyll b. The chain crosses the membrane as a helical span at residues 106-126 (FAMLGAAGAIAPEILGKAGLI). Ile-140 provides a ligand contact to chlorophyll b. The chain crosses the membrane as a helical span at residues 146 to 166 (YTYWADNYTLFVLEMALMGFA). Chlorophyll b contacts are provided by Glu-167 and Arg-170. Ser-195 is modified (phosphoserine). Chlorophyll a contacts are provided by Lys-224, Glu-225, Asn-228, Arg-230, Gln-242, and His-257. The chain crosses the membrane as a helical span at residues 231–251 (LAMLAILGYFIQGLVTGVGPY). Phe-272 contributes to the chlorophyll b binding site.

Belongs to the light-harvesting chlorophyll a/b-binding (LHC) protein family. In terms of assembly, the LHC complex consists of chlorophyll a-b binding proteins. Red-emitting heterodimer with LHCA2. Interacts with LHCA5. Binds to carotenoids. It depends on Binds at least 14 chlorophylls (8 Chl-a and 6 Chl-b) and carotenoids such as lutein and neoxanthin. as a cofactor. Post-translationally, photoregulated by reversible phosphorylation of its threonine residues.

It localises to the plastid. It is found in the chloroplast thylakoid membrane. Functionally, the light-harvesting complex (LHC) functions as a light receptor, it captures and delivers excitation energy to photosystems with which it is closely associated, here photosystem I. The protein is Photosystem I chlorophyll a/b-binding protein 3-1, chloroplastic of Arabidopsis thaliana (Mouse-ear cress).